A 157-amino-acid polypeptide reads, in one-letter code: Protein-export protein SecB (157 aa).

This sequence belongs to the SecB family. Homotetramer, a dimer of dimers. One homotetramer interacts with 1 SecA dimer.

The protein localises to the cytoplasm. One of the proteins required for the normal export of preproteins out of the cell cytoplasm. It is a molecular chaperone that binds to a subset of precursor proteins, maintaining them in a translocation-competent state. It also specifically binds to its receptor SecA. The chain is Protein-export protein SecB from Magnetococcus marinus (strain ATCC BAA-1437 / JCM 17883 / MC-1).